Consider the following 63-residue polypeptide: MKVTCVLVVLLLLLPYGDLLGNSVCDFGSCVHNGCYCEEHRPCCTPGSCSSWWPRCPGSMMDP.

The N-terminal stretch at 1-21 is a signal peptide; sequence MKVTCVLVVLLLLLPYGDLLG.

It belongs to the conotoxin O1 superfamily. Post-translationally, contains 4 disulfide bonds. As to expression, expressed by the venom duct.

The protein localises to the secreted. In terms of biological role, probable neurotoxin. This is Conotoxin Cal12.5 from Californiconus californicus (California cone).